The primary structure comprises 37 residues: Large ribosomal subunit protein bL36 (37 aa).

The protein belongs to the bacterial ribosomal protein bL36 family.

The sequence is that of Large ribosomal subunit protein bL36 from Thermomicrobium roseum (strain ATCC 27502 / DSM 5159 / P-2).